A 671-amino-acid chain; its full sequence is DNA ligase (671 aa).

NAD(+) contacts are provided by residues 32 to 36, 81 to 82, and Glu113; these read DAEYD and SL. The active-site N6-AMP-lysine intermediate is Lys115. NAD(+) contacts are provided by Arg136, Glu173, Lys290, and Lys314. Zn(2+) is bound by residues Cys408, Cys411, Cys426, and Cys432. In terms of domain architecture, BRCT spans 593–671; that stretch reads EIDSPFAGKT…EAEMLRLLGS (79 aa).

The protein belongs to the NAD-dependent DNA ligase family. LigA subfamily. The cofactor is Mg(2+). Mn(2+) serves as cofactor.

It catalyses the reaction NAD(+) + (deoxyribonucleotide)n-3'-hydroxyl + 5'-phospho-(deoxyribonucleotide)m = (deoxyribonucleotide)n+m + AMP + beta-nicotinamide D-nucleotide.. DNA ligase that catalyzes the formation of phosphodiester linkages between 5'-phosphoryl and 3'-hydroxyl groups in double-stranded DNA using NAD as a coenzyme and as the energy source for the reaction. It is essential for DNA replication and repair of damaged DNA. The sequence is that of DNA ligase from Escherichia coli O9:H4 (strain HS).